Consider the following 1278-residue polypeptide: Dynactin subunit 1 (1278 aa).

Residues 1–25 (MAQSKRHVYSRTPSGSRMSAEASAR) form a disordered region. One can recognise a CAP-Gly domain in the interval 48-90 (GATLFATGKWVGVILDEAKGKNDGTVQGRKYFTCDEGHGIFVR). Residues 100–223 (GADTTSPETP…SKEEEGLRAQ (124 aa)) are disordered. Residues 102 to 114 (DTTSPETPDSSAS) show a composition bias toward polar residues. Threonine 108 carries the post-translational modification Phosphothreonine. A compositionally biased stretch (basic residues) spans 129 to 152 (SKLRGLKPKKAPTARKTTTRRPKP). A phosphothreonine; by SLK mark is found at threonine 145, threonine 146, and threonine 147. Residues 161–184 (AGASSSLGPSGSASAGELSSSEPS) are compositionally biased toward low complexity. Residue serine 179 is modified to Phosphoserine; by PLK1. Residue serine 212 is modified to Phosphoserine; by CDK1. 3 coiled-coil regions span residues 213–547 (PSKE…RQQQ), 943–1049 (LKLE…EGLR), and 1182–1211 (SAQLMEQVAQLKSLSDTVEKLKDEVLKETV). Basic and acidic residues predominate over residues 214 to 223 (SKEEEGLRAQ). The segment at 911 to 1278 (EYDAERPPSK…LHQLHSRLIS (368 aa)) is interaction with HPS6.

It belongs to the dynactin 150 kDa subunit family. Monomer and homodimer. Subunit of dynactin, a multiprotein complex part of a tripartite complex with dynein and a adapter, such as BICDL1, BICD2 or HOOK3. The dynactin complex is built around ACTR1A/ACTB filament and consists of an actin-related filament composed of a shoulder domain, a pointed end and a barbed end. Its length is defined by its flexible shoulder domain. The soulder is composed of 2 DCTN1 subunits, 4 DCTN2 and 2 DCTN3. DCTN1/p150(glued) binds directly to microtubules and to cytoplasmic dynein. The 4 DCNT2 (via N-terminus) bind the ACTR1A filament and act as molecular rulers to determine the length. The pointed end is important for binding dynein-dynactin cargo adapters. Consists of 4 subunits: ACTR10, DCNT4, DCTN5 and DCTN6. The barbed end is composed of a CAPZA1:CAPZB heterodimers, which binds ACTR1A/ACTB filament and dynactin and stabilizes dynactin. Interacts with the C-terminus of MAPRE1, MAPRE2 and MAPRE3. Interacts (via C-terminus) with SNX6. Interacts with CLN3, DYNAP, ECPAS and FBXL5. Interacts with MISP; this interaction regulates its distribution at the cell cortex. Interacts with CEP131. Interacts with CEP126. Interacts with CLIP1. Interacts with dynein intermediate chain and dynein heavy chain. Interacts with PLK1 (via POLO-box domain). Interacts with TBCB. Binds preferentially to tyrosinated microtubules than to detyrosinated microtubules. Interacts with PARD6A. Interacts with HPS6. Interacts with KIF3A. Interacts with BICD2. Interacts with DST (isoform 9). Interacts with DST (isoform 1). Identified in a complex with MREG and RILP. Interacts with BCCIP (isoform 2/alpha). Interacts with DCDC1. Interacts with AKNA. Interacts with DYNC1I2. Interacts with RUFY3 and RUFY4. In terms of processing, ubiquitinated by a SCF complex containing FBXL5, leading to its degradation by the proteasome. Phosphorylation by SLK at Thr-145, Thr-146 and Thr-147 targets DCTN1 to the centrosome. It is uncertain if SLK phosphorylates all three threonines or one or two of them. PLK1-mediated phosphorylation at Ser-179 is essential for its localization in the nuclear envelope, promotes its dissociation from microtubules during early mitosis and positively regulates nuclear envelope breakdown during prophase. As to expression, brain.

Its subcellular location is the cytoplasm. The protein localises to the cytoskeleton. The protein resides in the microtubule organizing center. It is found in the centrosome. It localises to the centriole. Its subcellular location is the spindle. The protein localises to the nucleus envelope. The protein resides in the cell cortex. In terms of biological role, part of the dynactin complex that activates the molecular motor dynein for ultra-processive transport along microtubules. Plays a key role in dynein-mediated retrograde transport of vesicles and organelles along microtubules by recruiting and tethering dynein to microtubules. Binds to both dynein and microtubules providing a link between specific cargos, microtubules and dynein. Essential for targeting dynein to microtubule plus ends, recruiting dynein to membranous cargos and enhancing dynein processivity (the ability to move along a microtubule for a long distance without falling off the track). Can also act as a brake to slow the dynein motor during motility along the microtubule. Can regulate microtubule stability by promoting microtubule formation, nucleation and polymerization and by inhibiting microtubule catastrophe in neurons. Inhibits microtubule catastrophe by binding both to microtubules and to tubulin, leading to enhanced microtubule stability along the axon. Plays a role in metaphase spindle orientation. Plays a role in centriole cohesion and subdistal appendage organization and function. Its recruitment to the centriole in a KIF3A-dependent manner is essential for the maintenance of centriole cohesion and the formation of subdistal appendage. Also required for microtubule anchoring at the mother centriole. Plays a role in primary cilia formation. This is Dynactin subunit 1 from Homo sapiens (Human).